We begin with the raw amino-acid sequence, 190 residues long: Probable RNA-binding protein 18 (190 aa).

Residues 25–106 (HRLWIGNLDP…KKLVVRWAHA (82 aa)) form the RRM domain. Positions 166 to 190 (VYSYFKPPDKKRTTPYSRTAWKSRR) are disordered.

The protein is Probable RNA-binding protein 18 (Rbm18) of Mus musculus (Mouse).